The chain runs to 114 residues: uncharacterized protein (114 aa).

This is an uncharacterized protein from Escherichia coli O157:H7.